Consider the following 331-residue polypeptide: Olfactory receptor 7D11 (331 aa).

Over 1-25 (MEIENHTLITKFLILGLSDDPELQP) the chain is Extracellular. The N-linked (GlcNAc...) asparagine glycan is linked to N5. A helical transmembrane segment spans residues 26–46 (ILFGLFLSMYLVTLLGNLLII). The Cytoplasmic portion of the chain corresponds to 47 to 57 (LAVSSDSHLHK). Residues 58-78 (PMYFLLSNLSFIDICFISTTI) form a helical membrane-spanning segment. The Extracellular portion of the chain corresponds to 79-97 (PKMLVNMQSQIKDISYIEC). The cysteines at positions 97 and 179 are disulfide-linked. The chain crosses the membrane as a helical span at residues 98 to 118 (LTQVFFFNIFAGMDNFLLTLM). The Cytoplasmic portion of the chain corresponds to 119 to 142 (AYDRFVAICHPLNYTVIMNPRLCA). The chain crosses the membrane as a helical span at residues 143 to 163 (LLILMFWIIMFWVSLIHVLLM). The Extracellular segment spans residues 164 to 196 (NELNFSRGTEIPHFFCELAQVLKVSNSDNHVNN). N-linked (GlcNAc...) asparagine glycosylation occurs at N167. A helical transmembrane segment spans residues 197–217 (VFMYVVTSLLGVIPMTGILMS). Over 218 to 244 (YSQIFSSLFRMSSTVSKYKAFSTCGSH) the chain is Cytoplasmic. A helical membrane pass occupies residues 245-265 (LCVVTLFYGSGFGVYFSSSVV). Residues 266 to 271 (HSTQRR) are Extracellular-facing. The helical transmembrane segment at 272–292 (KVASLMYTVISPMLNPFIYTL) threads the bilayer. Residues 293–331 (RNKDVKGALGKLFNRVASSPSCINDIRNKLLLRSVRQIL) lie on the Cytoplasmic side of the membrane.

This sequence belongs to the G-protein coupled receptor 1 family.

The protein resides in the cell membrane. Its function is as follows. Possible olfactory or taste receptor. The protein is Olfactory receptor 7D11 of Mus musculus (Mouse).